A 95-amino-acid chain; its full sequence is Co-chaperonin GroES (95 aa).

This sequence belongs to the GroES chaperonin family. Heptamer of 7 subunits arranged in a ring. Interacts with the chaperonin GroEL.

Its subcellular location is the cytoplasm. Together with the chaperonin GroEL, plays an essential role in assisting protein folding. The GroEL-GroES system forms a nano-cage that allows encapsulation of the non-native substrate proteins and provides a physical environment optimized to promote and accelerate protein folding. GroES binds to the apical surface of the GroEL ring, thereby capping the opening of the GroEL channel. The protein is Co-chaperonin GroES of Nitratidesulfovibrio vulgaris (strain DSM 19637 / Miyazaki F) (Desulfovibrio vulgaris).